A 65-amino-acid polypeptide reads, in one-letter code: Large ribosomal subunit protein uL29 (65 aa).

The protein belongs to the universal ribosomal protein uL29 family.

This Methylococcus capsulatus (strain ATCC 33009 / NCIMB 11132 / Bath) protein is Large ribosomal subunit protein uL29.